We begin with the raw amino-acid sequence, 191 residues long: Phosphoheptose isomerase (191 aa).

An SIS domain is found at 37–191 (IAESFKQDGK…IIQLIEKEME (155 aa)). 52-54 (NGG) is a substrate binding site. Zn(2+) contacts are provided by His-61 and Glu-65. Residues Glu-65, 93 to 94 (ND), 119 to 121 (STS), Ser-124, and Gln-172 contribute to the substrate site. Positions 172 and 180 each coordinate Zn(2+).

It belongs to the SIS family. GmhA subfamily. In terms of assembly, homotetramer. Zn(2+) is required as a cofactor.

The protein resides in the cytoplasm. The catalysed reaction is 2 D-sedoheptulose 7-phosphate = D-glycero-alpha-D-manno-heptose 7-phosphate + D-glycero-beta-D-manno-heptose 7-phosphate. The protein operates within carbohydrate biosynthesis; D-glycero-D-manno-heptose 7-phosphate biosynthesis; D-glycero-alpha-D-manno-heptose 7-phosphate and D-glycero-beta-D-manno-heptose 7-phosphate from sedoheptulose 7-phosphate: step 1/1. Its pathway is bacterial outer membrane biogenesis; LPS core biosynthesis. Catalyzes the isomerization of sedoheptulose 7-phosphate in D-glycero-D-manno-heptose 7-phosphate. This chain is Phosphoheptose isomerase, found in Vibrio vulnificus (strain CMCP6).